A 208-amino-acid polypeptide reads, in one-letter code: Large ribosomal subunit protein bL25 (208 aa).

Belongs to the bacterial ribosomal protein bL25 family. CTC subfamily. As to quaternary structure, part of the 50S ribosomal subunit; part of the 5S rRNA/L5/L18/L25 subcomplex. Contacts the 5S rRNA. Binds to the 5S rRNA independently of L5 and L18.

Functionally, this is one of the proteins that binds to the 5S RNA in the ribosome where it forms part of the central protuberance. The sequence is that of Large ribosomal subunit protein bL25 from Bartonella quintana (strain Toulouse) (Rochalimaea quintana).